A 760-amino-acid chain; its full sequence is Polyribonucleotide nucleotidyltransferase (760 aa).

Residues aspartate 492 and aspartate 498 each contribute to the Mg(2+) site. The region spanning 559-618 (PQHAEVFVNPDIIRIIIGPGGKNIKAITATTGASIDIEDSGRVSIFAPTLEAMEMAREMV) is the KH domain. The region spanning 628 to 702 (GKNYTGKVRK…SRKAVLLEEQ (75 aa)) is the S1 motif domain. The segment at 706–760 (WKPEDTARPSGPREGGRRDGGRDGRRDGGRDGRRDGGRDGGRRDGGRRDGGRDRN) is disordered. The segment covering 719 to 760 (EGGRRDGGRDGRRDGGRDGRRDGGRDGGRRDGGRRDGGRDRN) has biased composition (basic and acidic residues).

It belongs to the polyribonucleotide nucleotidyltransferase family. The cofactor is Mg(2+).

It localises to the cytoplasm. The enzyme catalyses RNA(n+1) + phosphate = RNA(n) + a ribonucleoside 5'-diphosphate. In terms of biological role, involved in mRNA degradation. Catalyzes the phosphorolysis of single-stranded polyribonucleotides processively in the 3'- to 5'-direction. In Nitratidesulfovibrio vulgaris (strain ATCC 29579 / DSM 644 / CCUG 34227 / NCIMB 8303 / VKM B-1760 / Hildenborough) (Desulfovibrio vulgaris), this protein is Polyribonucleotide nucleotidyltransferase.